A 314-amino-acid chain; its full sequence is Homoserine O-acetyltransferase (314 aa).

Cys-142 (acyl-thioester intermediate) is an active-site residue. Residues Lys-163 and Ser-192 each coordinate substrate. His-235 (proton acceptor) is an active-site residue. The active site involves Glu-237. Residue Arg-249 participates in substrate binding.

This sequence belongs to the MetA family.

It localises to the cytoplasm. The catalysed reaction is L-homoserine + acetyl-CoA = O-acetyl-L-homoserine + CoA. Its pathway is amino-acid biosynthesis; L-methionine biosynthesis via de novo pathway; O-acetyl-L-homoserine from L-homoserine: step 1/1. Its function is as follows. Transfers an acetyl group from acetyl-CoA to L-homoserine, forming acetyl-L-homoserine. The sequence is that of Homoserine O-acetyltransferase from Streptococcus pneumoniae serotype 19F (strain G54).